Consider the following 444-residue polypeptide: Protein phosphatase 2C homolog C10F6.17c (444 aa).

The PPM-type phosphatase domain occupies 85–439 (RYDFNQVASN…DDITVTVIFF (355 aa)). The Mn(2+) site is built by D121, G122, and D344.

Belongs to the PP2C family. Mg(2+) is required as a cofactor. The cofactor is Mn(2+).

Its subcellular location is the mitochondrion. It catalyses the reaction O-phospho-L-seryl-[protein] + H2O = L-seryl-[protein] + phosphate. The catalysed reaction is O-phospho-L-threonyl-[protein] + H2O = L-threonyl-[protein] + phosphate. Involved in regulation of pyruvate dehydrogenase activity. The polypeptide is Protein phosphatase 2C homolog C10F6.17c (Schizosaccharomyces pombe (strain 972 / ATCC 24843) (Fission yeast)).